We begin with the raw amino-acid sequence, 287 residues long: Putative sugar uptake protein LJ_0170 (287 aa).

Helical transmembrane passes span 4–23 (VYLF…IASV), 28–50 (VYNQ…MAIM), 56–78 (WSLF…GQYI), 91–108 (ISTG…VLAF), 118–137 (LYGF…TSFT), 150–169 (VSTI…SSSI), 179–198 (SIFF…YTLV), 211–230 (VQSG…YILS), 240–259 (FVIS…IFLH), and 266–285 (GLIF…MLTT).

The protein belongs to the GRP transporter (TC 2.A.7.5) family.

Its subcellular location is the cell membrane. This Lactobacillus johnsonii (strain CNCM I-12250 / La1 / NCC 533) protein is Putative sugar uptake protein LJ_0170.